We begin with the raw amino-acid sequence, 591 residues long: Parathyroid hormone/parathyroid hormone-related peptide receptor (591 aa).

Residues 1 to 26 (MGTARIAPSLALLLCCPVLSSAYALV) form the signal peptide. Topologically, residues 27–188 (DADDVFTKEE…REREVFDRLG (162 aa)) are extracellular. 3 disulfide bridges follow: Cys48-Cys117, Cys108-Cys148, and Cys131-Cys170. The disordered stretch occupies residues 67 to 104 (KGWTPASTSGKPRKEKAPGKFYPESKENKDVPTGSRRR). The segment covering 81–96 (EKAPGKFYPESKENKD) has biased composition (basic and acidic residues). Asn151, Asn161, Asn166, and Asn176 each carry an N-linked (GlcNAc...) asparagine glycan. Residues 189-212 (MIYTVGYSMSLASLTVAVLILAYF) form a helical membrane-spanning segment. The Cytoplasmic segment spans residues 213–219 (RRLHCTR). A helical transmembrane segment spans residues 220–239 (NYIHMHMFLSFMLRAASIFV). The Extracellular portion of the chain corresponds to 240–282 (KDAVLYSGFTLDEAERLTEEELHIIAQVPPPPAAAAVGYAGCR). A helical membrane pass occupies residues 283–306 (VAVTFFLYFLATNYYWILVEGLYL). The Cytoplasmic portion of the chain corresponds to 307-320 (HSLIFMAFFSEKKY). A helical transmembrane segment spans residues 321 to 342 (LWGFTIFGWGLPAVFVAVWVGV). The Extracellular portion of the chain corresponds to 343–361 (RATLANTGCWDLSSGHKKW). The chain crosses the membrane as a helical span at residues 362-382 (IIQVPILASVVLNFILFINII). Residues 383 to 409 (RVLATKLRETNAGRCDTRQQYRKLLRS) lie on the Cytoplasmic side of the membrane. Residues 410 to 428 (TLVLVPLFGVHYTVFMALP) form a helical membrane-spanning segment. The Extracellular segment spans residues 429 to 440 (YTEVSGTLWQIQ). The chain crosses the membrane as a helical span at residues 441–463 (MHYEMLFNSFQGFFVAIIYCFCN). The Cytoplasmic segment spans residues 464–591 (GEVQAEIRKS…LLQEEWETVM (128 aa)). The Important for interaction with G proteins signature appears at 474–477 (WSRW).

This sequence belongs to the G-protein coupled receptor 2 family. Homodimer in the absence of bound ligand. Peptide hormone binding leads to dissociation of the homodimer. N-glycosylated. In terms of tissue distribution, detected in kidney.

It localises to the cell membrane. Functionally, G-protein-coupled receptor for parathyroid hormone (PTH) and for parathyroid hormone-related peptide (PTHLH). Ligand binding causes a conformation change that triggers signaling via guanine nucleotide-binding proteins (G proteins) and modulates the activity of downstream effectors, such as adenylate cyclase (cAMP). PTH1R is coupled to G(s) G alpha proteins and mediates activation of adenylate cyclase activity. PTHLH dissociates from PTH1R more rapidly than PTH; as consequence, the cAMP response induced by PTHLH decays faster than the response induced by PTH. The polypeptide is Parathyroid hormone/parathyroid hormone-related peptide receptor (Pth1r) (Mus musculus (Mouse)).